Here is a 185-residue protein sequence, read N- to C-terminus: Large ribosomal subunit protein uL5 (185 aa).

This sequence belongs to the universal ribosomal protein uL5 family. In terms of assembly, part of the 50S ribosomal subunit; part of the 5S rRNA/L5/L18/L25 subcomplex. Contacts the 5S rRNA and the P site tRNA. Forms a bridge to the 30S subunit in the 70S ribosome.

In terms of biological role, this is one of the proteins that bind and probably mediate the attachment of the 5S RNA into the large ribosomal subunit, where it forms part of the central protuberance. In the 70S ribosome it contacts protein S13 of the 30S subunit (bridge B1b), connecting the 2 subunits; this bridge is implicated in subunit movement. Contacts the P site tRNA; the 5S rRNA and some of its associated proteins might help stabilize positioning of ribosome-bound tRNAs. The sequence is that of Large ribosomal subunit protein uL5 from Nitrobacter winogradskyi (strain ATCC 25391 / DSM 10237 / CIP 104748 / NCIMB 11846 / Nb-255).